Reading from the N-terminus, the 339-residue chain is 3-isopropylmalate dehydrogenase (339 aa).

Residues Arg87, Arg97, Arg124, and Asp214 each coordinate substrate. Mg(2+)-binding residues include Asp214, Asp238, and Asp242. 274-286 (GSAPDIAGQGIAD) contacts NAD(+).

Belongs to the isocitrate and isopropylmalate dehydrogenases family. LeuB type 2 subfamily. As to quaternary structure, homodimer. Requires Mg(2+) as cofactor. The cofactor is Mn(2+).

Its subcellular location is the cytoplasm. The catalysed reaction is (2R,3S)-3-isopropylmalate + NAD(+) = 4-methyl-2-oxopentanoate + CO2 + NADH. It participates in amino-acid biosynthesis; L-leucine biosynthesis; L-leucine from 3-methyl-2-oxobutanoate: step 3/4. In terms of biological role, catalyzes the oxidation of 3-carboxy-2-hydroxy-4-methylpentanoate (3-isopropylmalate) to 3-carboxy-4-methyl-2-oxopentanoate. The product decarboxylates to 4-methyl-2 oxopentanoate. The chain is 3-isopropylmalate dehydrogenase from Mycobacterium ulcerans (strain Agy99).